Here is a 91-residue protein sequence, read N- to C-terminus: Protein xpaR7 (91 aa).

This chain is Protein xpaR7 (xpaR7), found in Bacillus licheniformis.